The primary structure comprises 92 residues: Alpha-elapitoxin-As2a (92 aa).

A signal peptide spans 1 to 21 (MKTLLLTLVVVTIVCLDLGDG). 5 cysteine pairs are disulfide-bonded: Cys-24–Cys-41, Cys-34–Cys-62, Cys-47–Cys-51, Cys-66–Cys-77, and Cys-78–Cys-83.

The protein belongs to the three-finger toxin family. Long-chain subfamily. Type II alpha-neurotoxin sub-subfamily. As to expression, expressed by the venom gland.

It localises to the secreted. In terms of biological role, binds with high affinity to muscular (alpha-1/CHRNA1) and neuronal (alpha-7/CHRNA7) nicotinic acetylcholine receptor (nAChR) and inhibits acetylcholine from binding to the receptor, thereby impairing neuromuscular and neuronal transmission. This is Alpha-elapitoxin-As2a from Austrelaps superbus (Lowland copperhead snake).